Here is a 203-residue protein sequence, read N- to C-terminus: Large ribosomal subunit protein uL18 (203 aa).

Belongs to the universal ribosomal protein uL18 family. In terms of assembly, part of the 50S ribosomal subunit. Contacts the 5S and 23S rRNAs.

This is one of the proteins that bind and probably mediate the attachment of the 5S RNA into the large ribosomal subunit, where it forms part of the central protuberance. This chain is Large ribosomal subunit protein uL18, found in Pyrococcus abyssi (strain GE5 / Orsay).